We begin with the raw amino-acid sequence, 280 residues long: Delta(3,5)-Delta(2,4)-dienoyl-CoA isomerase (280 aa).

Glu154 acts as the Proton donor/acceptor in catalysis. The Peroxisome targeting signal (PTS1) motif lies at 278–280 (HKL).

It belongs to the enoyl-CoA hydratase/isomerase family.

The protein localises to the cytoplasm. It localises to the cytosol. The protein resides in the peroxisome. It catalyses the reaction a (3E,5Z)-dienoyl-CoA = a (2E,4E)-(5,6-saturated)-dienoyl-CoA. The protein operates within lipid metabolism; fatty acid beta-oxidation. In terms of biological role, peroxisomal di-isomerase that is involved in fatty acid metabolism enzyme by converting 3,5-dienoyl-CoAs to the corresponding 2,4-dienoyl-CoAs. Involved in fatty acid beta-oxidation, which is important for lipid droplets degradation and infectious growth. This chain is Delta(3,5)-Delta(2,4)-dienoyl-CoA isomerase, found in Pyricularia oryzae (strain 70-15 / ATCC MYA-4617 / FGSC 8958) (Rice blast fungus).